A 164-amino-acid chain; its full sequence is Protein-export protein SecB (164 aa).

The protein belongs to the SecB family. As to quaternary structure, homotetramer, a dimer of dimers. One homotetramer interacts with 1 SecA dimer.

Its subcellular location is the cytoplasm. In terms of biological role, one of the proteins required for the normal export of preproteins out of the cell cytoplasm. It is a molecular chaperone that binds to a subset of precursor proteins, maintaining them in a translocation-competent state. It also specifically binds to its receptor SecA. The polypeptide is Protein-export protein SecB (Pseudomonas syringae pv. tomato (strain ATCC BAA-871 / DC3000)).